A 171-amino-acid chain; its full sequence is uncharacterized protein (171 aa).

2 disordered regions span residues 1–50 (MSHR…THLS) and 71–91 (RIDKDAPKHPYNRRGQQPMMK).

This is an uncharacterized protein from Caenorhabditis elegans.